Reading from the N-terminus, the 177-residue chain is Large ribosomal subunit protein uL6 (177 aa).

This sequence belongs to the universal ribosomal protein uL6 family. Part of the 50S ribosomal subunit.

In terms of biological role, this protein binds to the 23S rRNA, and is important in its secondary structure. It is located near the subunit interface in the base of the L7/L12 stalk, and near the tRNA binding site of the peptidyltransferase center. The protein is Large ribosomal subunit protein uL6 of Methylococcus capsulatus (strain ATCC 33009 / NCIMB 11132 / Bath).